Consider the following 169-residue polypeptide: Large ribosomal subunit protein uL5 (169 aa).

It belongs to the universal ribosomal protein uL5 family. In terms of assembly, part of the 50S ribosomal subunit; contacts the 5S rRNA and probably tRNA. Forms a bridge to the 30S subunit in the 70S ribosome.

Its function is as follows. This is one of the proteins that bind and probably mediate the attachment of the 5S RNA into the large ribosomal subunit, where it forms part of the central protuberance. In the 70S ribosome it contacts protein S13 of the 30S subunit (bridge B1b), connecting the 2 subunits; this bridge is implicated in subunit movement. May contact the P site tRNA; the 5S rRNA and some of its associated proteins might help stabilize positioning of ribosome-bound tRNAs. The sequence is that of Large ribosomal subunit protein uL5 from Methanosarcina barkeri (strain Fusaro / DSM 804).